A 628-amino-acid chain; its full sequence is Phosphomethylpyrimidine synthase (628 aa).

The span at 1 to 14 (MTISDIGSQATTHT) shows a compositional bias: polar residues. Residues 1-37 (MTISDIGSQATTHTPVKASKADALKTPAHRSETDARF) are disordered. The span at 19-37 (SKADALKTPAHRSETDARF) shows a compositional bias: basic and acidic residues. Residues Asn-260, Met-289, Tyr-318, His-354, 374–376 (SRG), 415–418 (DGLR), and Glu-454 each bind substrate. His-458 contacts Zn(2+). Tyr-481 lines the substrate pocket. His-522 is a Zn(2+) binding site. Cys-602, Cys-605, and Cys-610 together coordinate [4Fe-4S] cluster.

It belongs to the ThiC family. In terms of assembly, homodimer. Requires [4Fe-4S] cluster as cofactor.

It carries out the reaction 5-amino-1-(5-phospho-beta-D-ribosyl)imidazole + S-adenosyl-L-methionine = 4-amino-2-methyl-5-(phosphooxymethyl)pyrimidine + CO + 5'-deoxyadenosine + formate + L-methionine + 3 H(+). Its pathway is cofactor biosynthesis; thiamine diphosphate biosynthesis. Functionally, catalyzes the synthesis of the hydroxymethylpyrimidine phosphate (HMP-P) moiety of thiamine from aminoimidazole ribotide (AIR) in a radical S-adenosyl-L-methionine (SAM)-dependent reaction. In Psychrobacter cryohalolentis (strain ATCC BAA-1226 / DSM 17306 / VKM B-2378 / K5), this protein is Phosphomethylpyrimidine synthase.